A 328-amino-acid chain; its full sequence is D-cysteine desulfhydrase (328 aa).

Lys-51 carries the post-translational modification N6-(pyridoxal phosphate)lysine.

The protein belongs to the ACC deaminase/D-cysteine desulfhydrase family. In terms of assembly, homodimer. It depends on pyridoxal 5'-phosphate as a cofactor.

It carries out the reaction D-cysteine + H2O = hydrogen sulfide + pyruvate + NH4(+) + H(+). Its function is as follows. Catalyzes the alpha,beta-elimination reaction of D-cysteine and of several D-cysteine derivatives. It could be a defense mechanism against D-cysteine. This is D-cysteine desulfhydrase from Shigella sonnei (strain Ss046).